Here is a 265-residue protein sequence, read N- to C-terminus: Probable cell division protein kinase ECU08_0230 (265 aa).

The Protein kinase domain maps to 4 to 263 (YILGALIGSG…IMEILENEYG (260 aa)). Residues 10 to 18 (IGSGTYGEV) and Lys33 contribute to the ATP site. Asp121 serves as the catalytic Proton acceptor.

Belongs to the protein kinase superfamily. CMGC Ser/Thr protein kinase family. CDC2/CDKX subfamily.

Its subcellular location is the nucleus. The enzyme catalyses L-seryl-[protein] + ATP = O-phospho-L-seryl-[protein] + ADP + H(+). It catalyses the reaction L-threonyl-[protein] + ATP = O-phospho-L-threonyl-[protein] + ADP + H(+). May play a role in the control of the eukaryotic cell cycle. The sequence is that of Probable cell division protein kinase ECU08_0230 from Encephalitozoon cuniculi (strain GB-M1) (Microsporidian parasite).